Here is a 562-residue protein sequence, read N- to C-terminus: Dihydroxy-acid dehydratase (562 aa).

A Mg(2+)-binding site is contributed by aspartate 80. Cysteine 121 is a binding site for [2Fe-2S] cluster. The Mg(2+) site is built by aspartate 122 and lysine 123. Lysine 123 carries the N6-carboxylysine modification. Residue cysteine 194 coordinates [2Fe-2S] cluster. Mg(2+) is bound at residue glutamate 446. The active-site Proton acceptor is the serine 472.

This sequence belongs to the IlvD/Edd family. Homodimer. [2Fe-2S] cluster serves as cofactor. It depends on Mg(2+) as a cofactor.

The catalysed reaction is (2R)-2,3-dihydroxy-3-methylbutanoate = 3-methyl-2-oxobutanoate + H2O. It catalyses the reaction (2R,3R)-2,3-dihydroxy-3-methylpentanoate = (S)-3-methyl-2-oxopentanoate + H2O. It functions in the pathway amino-acid biosynthesis; L-isoleucine biosynthesis; L-isoleucine from 2-oxobutanoate: step 3/4. Its pathway is amino-acid biosynthesis; L-valine biosynthesis; L-valine from pyruvate: step 3/4. Its function is as follows. Functions in the biosynthesis of branched-chain amino acids. Catalyzes the dehydration of (2R,3R)-2,3-dihydroxy-3-methylpentanoate (2,3-dihydroxy-3-methylvalerate) into 2-oxo-3-methylpentanoate (2-oxo-3-methylvalerate) and of (2R)-2,3-dihydroxy-3-methylbutanoate (2,3-dihydroxyisovalerate) into 2-oxo-3-methylbutanoate (2-oxoisovalerate), the penultimate precursor to L-isoleucine and L-valine, respectively. This Staphylococcus aureus (strain Mu50 / ATCC 700699) protein is Dihydroxy-acid dehydratase.